We begin with the raw amino-acid sequence, 231 residues long: Uracil phosphoribosyltransferase (231 aa).

Residue 38 to 42 (KGLVR) participates in GTP binding. 5-phospho-alpha-D-ribose 1-diphosphate is bound by residues arginine 87, arginine 112, and 140 to 148 (DPMIATGST). Residues isoleucine 203 and 208-210 (GDA) each bind uracil. Aspartate 209 is a binding site for 5-phospho-alpha-D-ribose 1-diphosphate.

Belongs to the UPRTase family. Mg(2+) is required as a cofactor.

The catalysed reaction is UMP + diphosphate = 5-phospho-alpha-D-ribose 1-diphosphate + uracil. Its pathway is pyrimidine metabolism; UMP biosynthesis via salvage pathway; UMP from uracil: step 1/1. Its activity is regulated as follows. Allosterically activated by GTP. Functionally, catalyzes the conversion of uracil and 5-phospho-alpha-D-ribose 1-diphosphate (PRPP) to UMP and diphosphate. The polypeptide is Uracil phosphoribosyltransferase (Methanococcus maripaludis (strain C7 / ATCC BAA-1331)).